A 182-amino-acid chain; its full sequence is Large ribosomal subunit protein uL5 (182 aa).

It belongs to the universal ribosomal protein uL5 family. In terms of assembly, part of the 50S ribosomal subunit; part of the 5S rRNA/L5/L18/L25 subcomplex. Contacts the 5S rRNA and the P site tRNA. Forms a bridge to the 30S subunit in the 70S ribosome.

Functionally, this is one of the proteins that bind and probably mediate the attachment of the 5S RNA into the large ribosomal subunit, where it forms part of the central protuberance. In the 70S ribosome it contacts protein S13 of the 30S subunit (bridge B1b), connecting the 2 subunits; this bridge is implicated in subunit movement. Contacts the P site tRNA; the 5S rRNA and some of its associated proteins might help stabilize positioning of ribosome-bound tRNAs. The protein is Large ribosomal subunit protein uL5 of Nostoc sp. (strain PCC 7120 / SAG 25.82 / UTEX 2576).